Consider the following 196-residue polypeptide: UPF0340 protein TTHA0583 (196 aa).

The protein belongs to the UPF0340 family.

This is UPF0340 protein TTHA0583 from Thermus thermophilus (strain ATCC 27634 / DSM 579 / HB8).